The sequence spans 120 residues: Peptidyl-tRNA hydrolase (120 aa).

Belongs to the PTH2 family.

It is found in the cytoplasm. The enzyme catalyses an N-acyl-L-alpha-aminoacyl-tRNA + H2O = an N-acyl-L-amino acid + a tRNA + H(+). Its function is as follows. The natural substrate for this enzyme may be peptidyl-tRNAs which drop off the ribosome during protein synthesis. In Pyrobaculum aerophilum (strain ATCC 51768 / DSM 7523 / JCM 9630 / CIP 104966 / NBRC 100827 / IM2), this protein is Peptidyl-tRNA hydrolase.